The chain runs to 419 residues: GTPase Obg (419 aa).

The 156-residue stretch at 1–156 (MRFVDYVSIE…FYLDLQLKVM (156 aa)) folds into the Obg domain. Positions 157–334 (ADIGLVGKPN…LGENQKKLEI (178 aa)) constitute an OBG-type G domain. GTP-binding positions include 163–170 (GKPNAGKS), 188–192 (FTTLV), 209–212 (DLPG), 278–281 (NKCD), and 315–317 (NII). Mg(2+)-binding residues include S170 and T190. One can recognise an OCT domain in the interval 342-419 (IEFNLKAPFL…RIYEFEFHWN (78 aa)).

Belongs to the TRAFAC class OBG-HflX-like GTPase superfamily. OBG GTPase family. In terms of assembly, monomer. It depends on Mg(2+) as a cofactor.

It is found in the cytoplasm. In terms of biological role, an essential GTPase which binds GTP, GDP and possibly (p)ppGpp with moderate affinity, with high nucleotide exchange rates and a fairly low GTP hydrolysis rate. Plays a role in control of the cell cycle, stress response, ribosome biogenesis and in those bacteria that undergo differentiation, in morphogenesis control. The chain is GTPase Obg from Mesomycoplasma hyopneumoniae (strain 7448) (Mycoplasma hyopneumoniae).